The sequence spans 262 residues: Acyl-[acyl-carrier-protein]--UDP-N-acetylglucosamine O-acyltransferase (262 aa).

It belongs to the transferase hexapeptide repeat family. LpxA subfamily. In terms of assembly, homotrimer.

It is found in the cytoplasm. The enzyme catalyses a (3R)-hydroxyacyl-[ACP] + UDP-N-acetyl-alpha-D-glucosamine = a UDP-3-O-[(3R)-3-hydroxyacyl]-N-acetyl-alpha-D-glucosamine + holo-[ACP]. It participates in glycolipid biosynthesis; lipid IV(A) biosynthesis; lipid IV(A) from (3R)-3-hydroxytetradecanoyl-[acyl-carrier-protein] and UDP-N-acetyl-alpha-D-glucosamine: step 1/6. Its function is as follows. Involved in the biosynthesis of lipid A, a phosphorylated glycolipid that anchors the lipopolysaccharide to the outer membrane of the cell. This Salmonella schwarzengrund (strain CVM19633) protein is Acyl-[acyl-carrier-protein]--UDP-N-acetylglucosamine O-acyltransferase.